Reading from the N-terminus, the 191-residue chain is Protein YceI (191 aa).

Positions 1-22 (MKKSLLGLTFASLMFSAGSAVA) are cleaved as a signal peptide.

Belongs to the UPF0312 family. Type 1 subfamily.

The protein localises to the periplasm. The protein is Protein YceI of Escherichia coli O6:H1 (strain CFT073 / ATCC 700928 / UPEC).